Reading from the N-terminus, the 115-residue chain is Holo-[acyl-carrier-protein] synthase (115 aa).

Asp-5 and Glu-50 together coordinate Mg(2+).

The protein belongs to the P-Pant transferase superfamily. AcpS family. The cofactor is Mg(2+).

The protein resides in the cytoplasm. The enzyme catalyses apo-[ACP] + CoA = holo-[ACP] + adenosine 3',5'-bisphosphate + H(+). Functionally, transfers the 4'-phosphopantetheine moiety from coenzyme A to a Ser of acyl-carrier-protein. In Campylobacter fetus subsp. fetus (strain 82-40), this protein is Holo-[acyl-carrier-protein] synthase.